The chain runs to 271 residues: MNFQSKFLTRSQSLKSLLCVGLDPDYCKLPEIIKRSPEPLVHFCREIIDATAPYAVAYKPNIAFFEVFGSSGIRQFEKVIGHLKNNYPQIPIVADIKRGDLDNTARQYARYYFGDLQVDSLTLSPYMGLDTLRPFLEYQDHLVFWLCLTSNPDSIQFQKKRFSETGRTLYEEVAYVANSISPLNLGFVVGATNTYELEILRKQNPDRIFLIPGFGAQGAKLDDLLPVCGRYSLINSSRGIHFASDGLDFAARANQEAEKIHNAMQARFVFL.

Lys97 functions as the Proton donor in the catalytic mechanism.

It belongs to the OMP decarboxylase family. Type 2 subfamily.

It catalyses the reaction orotidine 5'-phosphate + H(+) = UMP + CO2. The protein operates within pyrimidine metabolism; UMP biosynthesis via de novo pathway; UMP from orotate: step 2/2. This Leptospira borgpetersenii serovar Hardjo-bovis (strain L550) protein is Orotidine 5'-phosphate decarboxylase.